A 357-amino-acid chain; its full sequence is Peptide chain release factor 1 (357 aa).

Q232 bears the N5-methylglutamine mark. Over residues 282–291 the composition is skewed to basic and acidic residues; it reads KQRAEQEAAR. The disordered stretch occupies residues 282 to 302; the sequence is KQRAEQEAARRSQVGTGDRSE.

The protein belongs to the prokaryotic/mitochondrial release factor family. Post-translationally, methylated by PrmC. Methylation increases the termination efficiency of RF1.

It localises to the cytoplasm. Its function is as follows. Peptide chain release factor 1 directs the termination of translation in response to the peptide chain termination codons UAG and UAA. This Solidesulfovibrio magneticus (strain ATCC 700980 / DSM 13731 / RS-1) (Desulfovibrio magneticus) protein is Peptide chain release factor 1.